The chain runs to 237 residues: Ubiquinone/menaquinone biosynthesis C-methyltransferase UbiE (237 aa).

Residues T60 and D80 each coordinate S-adenosyl-L-methionine.

This sequence belongs to the class I-like SAM-binding methyltransferase superfamily. MenG/UbiE family.

It carries out the reaction a 2-demethylmenaquinol + S-adenosyl-L-methionine = a menaquinol + S-adenosyl-L-homocysteine + H(+). The enzyme catalyses a 2-methoxy-6-(all-trans-polyprenyl)benzene-1,4-diol + S-adenosyl-L-methionine = a 5-methoxy-2-methyl-3-(all-trans-polyprenyl)benzene-1,4-diol + S-adenosyl-L-homocysteine + H(+). Its pathway is quinol/quinone metabolism; menaquinone biosynthesis; menaquinol from 1,4-dihydroxy-2-naphthoate: step 2/2. The protein operates within cofactor biosynthesis; ubiquinone biosynthesis. Functionally, methyltransferase required for the conversion of demethylmenaquinol (DMKH2) to menaquinol (MKH2) and the conversion of 2-polyprenyl-6-methoxy-1,4-benzoquinol (DDMQH2) to 2-polyprenyl-3-methyl-6-methoxy-1,4-benzoquinol (DMQH2). This is Ubiquinone/menaquinone biosynthesis C-methyltransferase UbiE from Syntrophotalea carbinolica (strain DSM 2380 / NBRC 103641 / GraBd1) (Pelobacter carbinolicus).